Here is a 706-residue protein sequence, read N- to C-terminus: Glutamine-dependent NAD(+) synthetase (706 aa).

In terms of domain architecture, CN hydrolase spans 5–275; that stretch reads VTVATCALNQ…VEVLTATLDL (271 aa). Residue E45 is the Proton acceptor; for glutaminase activity of the active site. The For glutaminase activity role is filled by K114. C175 (nucleophile; for glutaminase activity) is an active-site residue. Residues 325-706 are ligase; that stretch reads YHSPEEEISL…AAPQSLDGVD (382 aa). 355–362 is a binding site for ATP; that stretch reads PLSGGVDS. S357 is a catalytic residue.

This sequence in the C-terminal section; belongs to the NAD synthetase family. Homohexamer.

It catalyses the reaction deamido-NAD(+) + L-glutamine + ATP + H2O = L-glutamate + AMP + diphosphate + NAD(+) + H(+). It functions in the pathway cofactor biosynthesis; NAD(+) biosynthesis; NAD(+) from deamido-NAD(+) (L-Gln route): step 1/1. Functionally, catalyzes the final step of the nicotinamide adenine dinucleotide (NAD) de novo synthesis pathway, the ATP-dependent amidation of deamido-NAD using L-glutamine as a nitrogen source. This Macaca fascicularis (Crab-eating macaque) protein is Glutamine-dependent NAD(+) synthetase (NADSYN1).